Reading from the N-terminus, the 312-residue chain is Cytochrome f (312 aa).

The N-terminal stretch at 1–28 (MQISKFFKFVFISVSLCGSLLFPQMANA) is a signal peptide. Residues Tyr29, Cys49, Cys52, and His53 each coordinate heme. A helical membrane pass occupies residues 278-298 (VKGMIAFFFTVTVAQILLVLK).

It belongs to the cytochrome f family. In terms of assembly, the 4 large subunits of the cytochrome b6-f complex are cytochrome b6, subunit IV (17 kDa polypeptide, petD), cytochrome f and the Rieske protein, while the 4 small subunits are PetG, PetL, PetM and PetN. The complex functions as a dimer. Heme is required as a cofactor.

It is found in the plastid. The protein localises to the chloroplast thylakoid membrane. Functionally, component of the cytochrome b6-f complex, which mediates electron transfer between photosystem II (PSII) and photosystem I (PSI), cyclic electron flow around PSI, and state transitions. This Emiliania huxleyi (Coccolithophore) protein is Cytochrome f.